We begin with the raw amino-acid sequence, 94 residues long: CRISPR-associated endoribonuclease Cas2 (94 aa).

A Mg(2+)-binding site is contributed by D10.

The protein belongs to the CRISPR-associated endoribonuclease Cas2 protein family. Homodimer, forms a heterotetramer with a Cas1 homodimer. Requires Mg(2+) as cofactor.

CRISPR (clustered regularly interspaced short palindromic repeat), is an adaptive immune system that provides protection against mobile genetic elements (viruses, transposable elements and conjugative plasmids). CRISPR clusters contain sequences complementary to antecedent mobile elements and target invading nucleic acids. CRISPR clusters are transcribed and processed into CRISPR RNA (crRNA). Functions as a ssRNA-specific endoribonuclease. Involved in the integration of spacer DNA into the CRISPR cassette. The sequence is that of CRISPR-associated endoribonuclease Cas2 from Leptospira interrogans serogroup Icterohaemorrhagiae serovar Lai (strain 56601).